The primary structure comprises 466 residues: tRNA modification GTPase MnmE (466 aa).

Positions 22, 87, and 126 each coordinate (6S)-5-formyl-5,6,7,8-tetrahydrofolate. Positions 222-382 (GWRTVIVGRP…LTELIRRMVY (161 aa)) constitute a TrmE-type G domain. Asparagine 232 is a binding site for K(+). GTP contacts are provided by residues 232–237 (NVGKSS), 251–257 (TEIPGTT), and 276–279 (DTAG). Serine 236 is a binding site for Mg(2+). Threonine 251, isoleucine 253, and threonine 256 together coordinate K(+). Threonine 257 provides a ligand contact to Mg(2+). Lysine 466 is a (6S)-5-formyl-5,6,7,8-tetrahydrofolate binding site.

It belongs to the TRAFAC class TrmE-Era-EngA-EngB-Septin-like GTPase superfamily. TrmE GTPase family. In terms of assembly, homodimer. Heterotetramer of two MnmE and two MnmG subunits. It depends on K(+) as a cofactor.

It is found in the cytoplasm. Functionally, exhibits a very high intrinsic GTPase hydrolysis rate. Involved in the addition of a carboxymethylaminomethyl (cmnm) group at the wobble position (U34) of certain tRNAs, forming tRNA-cmnm(5)s(2)U34. The protein is tRNA modification GTPase MnmE of Heliobacterium modesticaldum (strain ATCC 51547 / Ice1).